A 275-amino-acid polypeptide reads, in one-letter code: Orotidine 5'-phosphate decarboxylase (275 aa).

K95 serves as the catalytic Proton donor.

Belongs to the OMP decarboxylase family. Type 2 subfamily.

It catalyses the reaction orotidine 5'-phosphate + H(+) = UMP + CO2. It functions in the pathway pyrimidine metabolism; UMP biosynthesis via de novo pathway; UMP from orotate: step 2/2. This chain is Orotidine 5'-phosphate decarboxylase, found in Delftia acidovorans (strain DSM 14801 / SPH-1).